The chain runs to 513 residues: Ribonuclease Y (513 aa).

A helical transmembrane segment spans residues 4–24; that stretch reads TTSLIIAILAGILGIVIGFFF. The interval 78–106 is disordered; it reads KSRLKEISRQEDRLNSKEENLERKNASLE. Positions 203–288 constitute a KH domain; the sequence is TVSVVNLPND…EMVEKARKDV (86 aa). In terms of domain architecture, HD spans 329 to 422; it reads VLKHSIEVSN…VQSADAISAA (94 aa).

It belongs to the RNase Y family.

It is found in the cell membrane. In terms of biological role, endoribonuclease that initiates mRNA decay. In Finegoldia magna (strain ATCC 29328 / DSM 20472 / WAL 2508) (Peptostreptococcus magnus), this protein is Ribonuclease Y.